A 475-amino-acid polypeptide reads, in one-letter code: UDP-N-acetylmuramate--L-alanine ligase (475 aa).

112–118 is an ATP binding site; the sequence is GTHGKTT.

This sequence belongs to the MurCDEF family.

Its subcellular location is the cytoplasm. It catalyses the reaction UDP-N-acetyl-alpha-D-muramate + L-alanine + ATP = UDP-N-acetyl-alpha-D-muramoyl-L-alanine + ADP + phosphate + H(+). It functions in the pathway cell wall biogenesis; peptidoglycan biosynthesis. Functionally, cell wall formation. In Paracidovorax citrulli (strain AAC00-1) (Acidovorax citrulli), this protein is UDP-N-acetylmuramate--L-alanine ligase.